The chain runs to 122 residues: Hexon-interlacing protein (122 aa).

Residues 72-106 are a coiled coil; it reads VTELNESIDELQQKMTELEKRLKIMEEKIEEIKLA.

This sequence belongs to the adenoviridae hexon-interlacing protein family. As to quaternary structure, homotrimer. Interacts with hexon protein; this interaction tethers the hexons together. Self-interacts with adjacent proteins. Interacts with kinesin light chain KLC1; this interaction leads to capsid disruption at the nuclear pore complex during virus entry into host cell.

Its subcellular location is the virion. The protein resides in the host nucleus. Functionally, structural component of the virion that acts as a cement protein on the capsid exterior and forms triskelion structures consisting of three molecules that stabilize three hexon trimers at the center of each icosahedral facet and fixes the peripentonal hexons. Dispensable for assembly. During virus entry, recruits the anterograde motor kinesin-1 to the capsid docked at the nuclear pore complex thereby subjecting the docked capsid to a pulling force. The resulting tension leads to capsid disruption, dispersion of capsid fragments toward cell periphery and eventually viral DNA entry into the host nucleus. The sequence is that of Hexon-interlacing protein from Tupaiidae (tree shrews).